The sequence spans 276 residues: Protein FAM151B (276 aa).

This sequence belongs to the menorin family.

In terms of biological role, essential for survival of retinal photoreceptor cells. This chain is Protein FAM151B (FAM151B), found in Homo sapiens (Human).